A 794-amino-acid polypeptide reads, in one-letter code: Zinc finger protein 148 (794 aa).

Lys6 participates in a covalent cross-link: Glycyl lysine isopeptide (Lys-Gly) (interchain with G-Cter in SUMO2). Ser51 carries the post-translational modification Phosphoserine. Glycyl lysine isopeptide (Lys-Gly) (interchain with G-Cter in SUMO2) cross-links involve residues Lys88, Lys115, and Lys132. The segment at 171–193 (HVCEHCNAAFRTNYHLQRHVFIH) adopts a C2H2-type 1 zinc-finger fold. Thr194 is subject to Phosphothreonine. 2 consecutive C2H2-type zinc fingers follow at residues 199-221 (FQCSQCDMRFIQKYLLQRHEKIH) and 227-249 (FRCDECGMRFIQKYHMERHKRTH). Ser250 is subject to Phosphoserine. The C2H2-type 4 zinc-finger motif lies at 255–278 (YQCEYCLQYFSRTDRVLKHKRMCH). Lys291 participates in a covalent cross-link: Glycyl lysine isopeptide (Lys-Gly) (interchain with G-Cter in SUMO2). The segment at 298–336 (EEDSGFSTSPKDNSLPKKKRQKTEKKSSGMDKESALDKS) is disordered. Ser301 and Ser306 each carry phosphoserine. Lys308 participates in a covalent cross-link: Glycyl lysine isopeptide (Lys-Gly) (interchain with G-Cter in SUMO2). Residues 321–336 (EKKSSGMDKESALDKS) are compositionally biased toward basic and acidic residues. Lys356 is covalently cross-linked (Glycyl lysine isopeptide (Lys-Gly) (interchain with G-Cter in SUMO1); alternate). A Glycyl lysine isopeptide (Lys-Gly) (interchain with G-Cter in SUMO2); alternate cross-link involves residue Lys356. A Glycyl lysine isopeptide (Lys-Gly) (interchain with G-Cter in SUMO2) cross-link involves residue Lys402. Residue Ser412 is modified to Phosphoserine. Residues Lys421 and Lys424 each participate in a glycyl lysine isopeptide (Lys-Gly) (interchain with G-Cter in SUMO2) cross-link. Polar residues predominate over residues 574 to 588 (NSSEVPEVTPSENVG). Residues 574 to 599 (NSSEVPEVTPSENVGSSSQASSSDKA) are disordered. Lys607 is modified (N6-acetyllysine). A phosphoserine mark is found at Ser665 and Ser784.

It belongs to the krueppel C2H2-type zinc-finger protein family. As to quaternary structure, interacts with HNRNPDL. Interacts with the 5FMC complex; the interaction requires association with CHTOP. Interacts with CAVIN1. Sumoylated with SUMO2. Desumoylated by SENP3, resulting in the stimulation of transcription of its target genes.

The protein localises to the nucleus. Involved in transcriptional regulation. Represses the transcription of a number of genes including gastrin, stromelysin and enolase. Binds to the G-rich box in the enhancer region of these genes. This chain is Zinc finger protein 148 (ZNF148), found in Pongo abelii (Sumatran orangutan).